The following is an 81-amino-acid chain: Small ribosomal subunit protein bS16 (81 aa).

It belongs to the bacterial ribosomal protein bS16 family.

This chain is Small ribosomal subunit protein bS16, found in Treponema denticola (strain ATCC 35405 / DSM 14222 / CIP 103919 / JCM 8153 / KCTC 15104).